Consider the following 203-residue polypeptide: Early nodulin-like protein 9 (203 aa).

Residues 1–27 form the signal peptide; sequence MARNLKSMMLCGFGLLCFLMIVDRAYA. The region spanning 28–130 is the Phytocyanin domain; it reads REFTVGGATG…NEKLVVIVMA (103 aa). Cys84 and Cys118 are oxidised to a cystine. Residue Asn103 is glycosylated (N-linked (GlcNAc...) asparagine). Positions 134 to 181 are disordered; sequence GNKNTASSPPSPAPAPSGESAPSPPVSGTFEMTPAPTPTTSEDTPNSA. Ser180 carries GPI-anchor amidated serine lipidation. Residues 181–203 constitute a propeptide, removed in mature form; it reads AASSLSFVAALLGAALASTLFLH.

Belongs to the early nodulin-like (ENODL) family. As to expression, specifically observed at the plasma membrane of sieve elements in vascular tissues of leaves, stems, roots, flowers and reproductive organs. Absent from companion cells.

It is found in the cell membrane. May act as a carbohydrate transporter. Mainly required for reproductive functions. This Arabidopsis thaliana (Mouse-ear cress) protein is Early nodulin-like protein 9.